The following is a 121-amino-acid chain: MKMNSKQPRKQRKFLYNAPLHVRQKMMSAPLSKELREKYKVRNLPVRVGDKVRIMRGDFKGYEGKVVEVDLKRYRIYVEGVTLRKVNGTEVFYPIHPSNVMIIELNLDDEKRKKIIERRAG.

The protein belongs to the universal ribosomal protein uL24 family. In terms of assembly, part of the 50S ribosomal subunit.

Functionally, one of two assembly initiator proteins, it binds directly to the 5'-end of the 23S rRNA, where it nucleates assembly of the 50S subunit. Located at the polypeptide exit tunnel on the outside of the subunit. This is Large ribosomal subunit protein uL24 from Pyrococcus horikoshii (strain ATCC 700860 / DSM 12428 / JCM 9974 / NBRC 100139 / OT-3).